Here is a 45-residue protein sequence, read N- to C-terminus: Temporin-SHf (45 aa).

The N-terminal stretch at 1-10 (FLGTINLSLC) is a signal peptide. Residues 11–35 (EEERDADEEERRDEPDESNVEVKKR) constitute a propeptide that is removed on maturation. F43 is modified (phenylalanine amide).

Belongs to the frog skin active peptide (FSAP) family. Temporin subfamily.

It localises to the secreted. It is found in the target cell membrane. Functionally, non-amphipathic alpha-helical antimicrobial peptide with potent activity against some Gram-positive bacteria (including methicillin-resistant Staphylococcus aureus (MRSA)), weak activity against Gram-negative bacteria and no activity against fungi. Permeabilizates membranes through a detergent-like effect probably via the carpet mechanism. More precisely, it strongly and selectively perturbs anionic bilayers membranes by interacting with the polar headgroups and the glycerol backbone region of the phospholipids, hence disrupting the acyl chain packing of the bilayer. Is not active against Leishmania (promastigote and axenic amastigote forms). Does not show hemolytic activity. Does not show toxicity for human THP-1-derived macrophages. This is Temporin-SHf from Pelophylax saharicus (Sahara frog).